A 70-amino-acid chain; its full sequence is Protein SlyX homolog (70 aa).

The protein belongs to the SlyX family.

The sequence is that of Protein SlyX homolog from Pseudoalteromonas atlantica (strain T6c / ATCC BAA-1087).